The following is a 148-amino-acid chain: Multiprotein-bridging factor 1c (148 aa).

One can recognise an HTH cro/C1-type domain in the interval 91–145 (IQKARLEKKMSQADLAKQINERTQVVQEYENGKAVPNQAVLAKMEKVLGVKLRGK). Positions 102 to 121 (QADLAKQINERTQVVQEYEN) form a DNA-binding region, H-T-H motif.

The protein belongs to the MBF1 family. In terms of assembly, binds to TPS5. In terms of tissue distribution, expressed in leaves, roots, stems, flowers, siliques and shoots. Not detected in seeds.

It localises to the nucleus. It is found in the nucleolus. The protein localises to the cytoplasm. In terms of biological role, transcriptional coactivator that stimulates transcriptional activity by bridging regulatory proteins and TBP, thereby recruiting TBP to promoters occupied by DNA-binding regulators. Involved in the tolerance to heat and osmotic stress by partially activating the ethylene-response signal transduction pathway. This is Multiprotein-bridging factor 1c (MBF1C) from Arabidopsis thaliana (Mouse-ear cress).